The chain runs to 95 residues: Probable FAD-linked sulfhydryl oxidase OPG072 (95 aa).

The Intravirion segment spans residues 1 to 8 (MNPKHWGR). An ERV/ALR sulfhydryl oxidase domain is found at 1 to 95 (MNPKHWGRAV…AIDVSKVKPL (95 aa)). A helical membrane pass occupies residues 9-25 (AVWTIIFIVLSQAGLDG). At 26 to 95 (NIEACKRKLY…AIDVSKVKPL (70 aa)) the chain is on the virion surface side. A disulfide bridge connects residues Cys43 and Cys46.

Belongs to the orthopoxvirus OPG072 family. Interacts with OPG128; this interaction involves formation of a transient disulfide-bonded intermediate, allowing disulfide bond transfer. Requires FAD as cofactor.

The protein localises to the virion membrane. The protein resides in the host cytoplasm. The catalysed reaction is 2 R'C(R)SH + O2 = R'C(R)S-S(R)CR' + H2O2. FAD-dependent sulfhydryl oxidase that catalyzes disulfide bond formation. The complete pathway for formation of disulfide bonds in intracellular virion membrane proteins sequentially involves thiol-disulfide transfer between OPG072, OPG128 and OPG088. The sequence is that of Probable FAD-linked sulfhydryl oxidase OPG072 (OPG072) from Vaccinia virus (strain Copenhagen) (VACV).